The chain runs to 444 residues: Ribitol-5-phosphate xylosyltransferase 1 (444 aa).

The Cytoplasmic portion of the chain corresponds to 1-9 (MRLTRTRLC). A helical; Signal-anchor for type II membrane protein membrane pass occupies residues 10–30 (SLLVALYCLFSIYAAYHVFFG). At 31 to 444 (RRRRPLGTTS…ESSFFINNKV (414 aa)) the chain is on the extracellular side. Positions 38 to 79 (TTSRNSRKAAAAQAKERRGREQSALESEEWNPWEGDEKNEQR) are disordered. Residues 51–60 (AKERRGREQS) are compositionally biased toward basic and acidic residues.

This sequence belongs to the RXYLT1 family. In terms of assembly, forms a complex composed of FKTN/fukutin, FKRP and RXYLT1/TMEM5.

It is found in the golgi apparatus membrane. The enzyme catalyses 3-O-[Rib-ol-P-Rib-ol-P-3-beta-D-GalNAc-(1-&gt;3)-beta-D-GlcNAc-(1-&gt;4)-(O-6-P-alpha-D-Man)]-Thr-[protein] + UDP-alpha-D-xylose = 3-O-[beta-D-Xyl-(1-&gt;4)-Rib-ol-P-Rib-ol-P-3-beta-D-GalNAc-(1-&gt;3)-beta-D-GlcNAc-(1-&gt;4)-(O-6-P-alpha-D-Man)]-Thr-[protein] + UDP + H(+). The protein operates within protein modification; protein glycosylation. Acts as a UDP-D-xylose:ribitol-5-phosphate beta1,4-xylosyltransferase, which catalyzes the transfer of UDP-D-xylose to ribitol 5-phosphate (Rbo5P) to form the Xylbeta1-4Rbo5P linkage on O-mannosyl glycan. Participates in the biosynthesis of the phosphorylated O-mannosyl trisaccharide (N-acetylgalactosamine-beta-3-N-acetylglucosamine-beta-4-(phosphate-6-)mannose), a carbohydrate structure present in alpha-dystroglycan (DAG1), which is required for binding laminin G-like domain-containing extracellular proteins with high affinity. The polypeptide is Ribitol-5-phosphate xylosyltransferase 1 (Mus musculus (Mouse)).